A 57-amino-acid polypeptide reads, in one-letter code: Somatostatin-2 (57 aa).

A disordered region spans residues 1 to 26 (GRSHMVLNSALEGARGGPGGEEIPER).

The protein belongs to the somatostatin family.

The protein localises to the secreted. In terms of biological role, somatostatin inhibits the release of somatotropin. In Piaractus mesopotamicus (Small-scaled pacu), this protein is Somatostatin-2 (sst2).